The following is a 558-amino-acid chain: Formate--tetrahydrofolate ligase (558 aa).

Position 66–73 (66–73 (TPAGEGKT)) interacts with ATP.

It belongs to the formate--tetrahydrofolate ligase family.

It carries out the reaction (6S)-5,6,7,8-tetrahydrofolate + formate + ATP = (6R)-10-formyltetrahydrofolate + ADP + phosphate. The protein operates within one-carbon metabolism; tetrahydrofolate interconversion. This is Formate--tetrahydrofolate ligase from Neisseria meningitidis serogroup A / serotype 4A (strain DSM 15465 / Z2491).